A 209-amino-acid chain; its full sequence is Large ribosomal subunit protein uL3 (209 aa).

Residues 121–154 (GGIKRHNFHRGPMAHGSKYHRRPGSSAAKGPART) are disordered.

Belongs to the universal ribosomal protein uL3 family. In terms of assembly, part of the 50S ribosomal subunit. Forms a cluster with proteins L14 and L19.

Functionally, one of the primary rRNA binding proteins, it binds directly near the 3'-end of the 23S rRNA, where it nucleates assembly of the 50S subunit. In Desulforamulus reducens (strain ATCC BAA-1160 / DSM 100696 / MI-1) (Desulfotomaculum reducens), this protein is Large ribosomal subunit protein uL3.